The chain runs to 342 residues: Ribosomal RNA small subunit methyltransferase C (342 aa).

The protein belongs to the methyltransferase superfamily. RsmC family. As to quaternary structure, monomer.

It localises to the cytoplasm. The enzyme catalyses guanosine(1207) in 16S rRNA + S-adenosyl-L-methionine = N(2)-methylguanosine(1207) in 16S rRNA + S-adenosyl-L-homocysteine + H(+). Functionally, specifically methylates the guanine in position 1207 of 16S rRNA in the 30S particle. This is Ribosomal RNA small subunit methyltransferase C from Hahella chejuensis (strain KCTC 2396).